A 110-amino-acid polypeptide reads, in one-letter code: U-scoloptoxin(16)-Er7a (110 aa).

Positions 1 to 26 (MTSTRKLSVSCLIVFMVSSLIAVSSG) are cleaved as a signal peptide.

It belongs to the scoloptoxin-16 family. Post-translationally, contains 4 disulfide bonds. In terms of tissue distribution, expressed by the venom gland.

Its subcellular location is the secreted. This is U-scoloptoxin(16)-Er7a from Ethmostigmus rubripes (Giant centipede).